The primary structure comprises 224 residues: Deoxyribose-phosphate aldolase (224 aa).

The Proton donor/acceptor role is filled by Asp-92. Residue Lys-154 is the Schiff-base intermediate with acetaldehyde of the active site. Lys-183 functions as the Proton donor/acceptor in the catalytic mechanism.

This sequence belongs to the DeoC/FbaB aldolase family. DeoC type 1 subfamily.

The protein localises to the cytoplasm. The catalysed reaction is 2-deoxy-D-ribose 5-phosphate = D-glyceraldehyde 3-phosphate + acetaldehyde. It participates in carbohydrate degradation; 2-deoxy-D-ribose 1-phosphate degradation; D-glyceraldehyde 3-phosphate and acetaldehyde from 2-deoxy-alpha-D-ribose 1-phosphate: step 2/2. Its function is as follows. Catalyzes a reversible aldol reaction between acetaldehyde and D-glyceraldehyde 3-phosphate to generate 2-deoxy-D-ribose 5-phosphate. This chain is Deoxyribose-phosphate aldolase, found in Histophilus somni (strain 129Pt) (Haemophilus somnus).